We begin with the raw amino-acid sequence, 223 residues long: Thiamine-phosphate synthase (223 aa).

4-amino-2-methyl-5-(diphosphooxymethyl)pyrimidine is bound by residues 37-41 (QFREK) and Asp72. Residues Asp73 and Asp92 each coordinate Mg(2+). Residue Ser110 participates in 4-amino-2-methyl-5-(diphosphooxymethyl)pyrimidine binding. Residue 136–138 (TQS) coordinates 2-[(2R,5Z)-2-carboxy-4-methylthiazol-5(2H)-ylidene]ethyl phosphate. Lys139 provides a ligand contact to 4-amino-2-methyl-5-(diphosphooxymethyl)pyrimidine. Residues Gly168 and 188–189 (IS) each bind 2-[(2R,5Z)-2-carboxy-4-methylthiazol-5(2H)-ylidene]ethyl phosphate.

It belongs to the thiamine-phosphate synthase family. It depends on Mg(2+) as a cofactor.

It carries out the reaction 2-[(2R,5Z)-2-carboxy-4-methylthiazol-5(2H)-ylidene]ethyl phosphate + 4-amino-2-methyl-5-(diphosphooxymethyl)pyrimidine + 2 H(+) = thiamine phosphate + CO2 + diphosphate. The catalysed reaction is 2-(2-carboxy-4-methylthiazol-5-yl)ethyl phosphate + 4-amino-2-methyl-5-(diphosphooxymethyl)pyrimidine + 2 H(+) = thiamine phosphate + CO2 + diphosphate. The enzyme catalyses 4-methyl-5-(2-phosphooxyethyl)-thiazole + 4-amino-2-methyl-5-(diphosphooxymethyl)pyrimidine + H(+) = thiamine phosphate + diphosphate. The protein operates within cofactor biosynthesis; thiamine diphosphate biosynthesis; thiamine phosphate from 4-amino-2-methyl-5-diphosphomethylpyrimidine and 4-methyl-5-(2-phosphoethyl)-thiazole: step 1/1. Functionally, condenses 4-methyl-5-(beta-hydroxyethyl)thiazole monophosphate (THZ-P) and 2-methyl-4-amino-5-hydroxymethyl pyrimidine pyrophosphate (HMP-PP) to form thiamine monophosphate (TMP). The polypeptide is Thiamine-phosphate synthase (Streptococcus agalactiae serotype III (strain NEM316)).